A 462-amino-acid polypeptide reads, in one-letter code: Glycoprotein endo-alpha-1,2-mannosidase (462 aa).

Residues 1–9 (MAKFRRRTC) are Cytoplasmic-facing. Residues 10-30 (IILSLFIVFIFSLMMGLKMLW) traverse the membrane as a helical; Signal-anchor for type II membrane protein segment. The Lumenal portion of the chain corresponds to 31–462 (PNAASFGPPF…YALDQQLPAS (432 aa)). The tract at residues 60-462 (DFQRSDRIDM…YALDQQLPAS (403 aa)) is catalytic.

It belongs to the glycosyl hydrolase 99 family. Undergoes proteolytic cleavage in the C-terminal region. Highly expressed in the liver and kidney.

It is found in the golgi apparatus membrane. It carries out the reaction N-{alpha-Glc-(1-&gt;3)-alpha-Man-(1-&gt;2)-alpha-Man-(1-&gt;2)-alpha-Man-(1-&gt;3)-[alpha-Man-(1-&gt;2)-alpha-Man-(1-&gt;3)-[alpha-Man-(1-&gt;2)-alpha-Man-(1-&gt;6)]-alpha-Man-(1-&gt;6)]-beta-Man-(1-&gt;4)-beta-GlcNAc-(1-&gt;4)-beta-GlcNAc}-L-asparaginyl-[protein] + H2O = alpha-D-glucosyl-(1-&gt;3)-D-mannopyranose + N(4)-{alpha-D-Man-(1-&gt;2)-alpha-D-Man-(1-&gt;3)-[alpha-D-Man-(1-&gt;2)-alpha-D-Man-(1-&gt;3)-[alpha-D-Man-(1-&gt;2)-alpha-D-Man-(1-&gt;6)]-alpha-D-Man-(1-&gt;6)]-beta-D-Man-(1-&gt;4)-beta-D-GlaNAc-(1-&gt;4)-beta-D-GlcNAc}-L-asparaginyl-[protein] (N-glucan mannose isomer 8A1,2,3B1,2). In Rattus norvegicus (Rat), this protein is Glycoprotein endo-alpha-1,2-mannosidase (Manea).